A 381-amino-acid chain; its full sequence is Early boundary activity protein 2 (381 aa).

The tract at residues 210–245 is disordered; that stretch reads NDAEDVPAPPSKRPRHMSTSSSESHIPDTASEKDEK. The BEN domain maps to 268–365; that stretch reads PNGTQITAHQ…TKCADTAKKY (98 aa).

As to quaternary structure, the heterotrimeric Elba complex consists of Elba1, Elba2 and Elba3.

It localises to the nucleus. In terms of biological role, the heterotrimeric Elba complex is required for chromatin domain boundary function during early embryogenesis. It binds to a 8-bp sequence 5'-CCAATAAG-3' in the Fab-7 insulator or boundary element in the bithorax complex and contributes to its insulator or boundary activity. Elba2 can act as a transcriptional repressor and binds the palindromic sequence 5'-CCAATTGG-3' to mediate transcriptional repression. This chain is Early boundary activity protein 2, found in Drosophila melanogaster (Fruit fly).